The primary structure comprises 78 residues: Large ribosomal subunit protein bL28 (78 aa).

Belongs to the bacterial ribosomal protein bL28 family.

The chain is Large ribosomal subunit protein bL28 from Edwardsiella ictaluri (strain 93-146).